The following is a 189-amino-acid chain: Class A basic helix-loop-helix protein 15 (189 aa).

The segment covering 1–12 (MKTKNRPPRRRA) has biased composition (basic residues). 2 disordered regions span residues 1-85 (MKTK…ERER) and 167-189 (TEAQ…REGT). Residue T25 is modified to Phosphothreonine. Residues 68 to 85 (GRRDSSIQRRLESNERER) show a composition bias toward basic and acidic residues. The region spanning 75-127 (QRRLESNERERQRMHKLNNAFQALREVIPHVRADKKLSKIETLTLAKNYIKSL) is the bHLH domain.

Forms homodimers or heterodimers with TCF3 gene products E12 and E47. These dimers bind to the E-box site, however, heterodimer with MYOD1 does not bind target DNA. In terms of tissue distribution, expressed in brain, liver, spleen and skeletal muscle.

Its subcellular location is the nucleus. In terms of biological role, plays a role in controlling the transcriptional activity of MYOD1, ensuring that expanding myoblast populations remain undifferentiated. Repression may occur through muscle-specific E-box occupancy by homodimers. May also negatively regulate bHLH-mediated transcription through an N-terminal repressor domain. Serves as a key regulator of acinar cell function, stability, and identity. Also required for normal organelle localization in exocrine cells and for mitochondrial calcium ion transport. May function as a unique regulator of gene expression in several different embryonic and postnatal cell lineages. Binds to the E-box consensus sequence 5'-CANNTG-3'. This Homo sapiens (Human) protein is Class A basic helix-loop-helix protein 15 (BHLHA15).